A 343-amino-acid chain; its full sequence is Anthranilate phosphoribosyltransferase (343 aa).

5-phospho-alpha-D-ribose 1-diphosphate-binding positions include G84, 87 to 88 (GD), T92, 94 to 97 (NIST), 112 to 120 (KHGNRGVSS), and S124. G84 contributes to the anthranilate binding site. Position 96 (S96) interacts with Mg(2+). N115 lines the anthranilate pocket. R170 is a binding site for anthranilate. Mg(2+) is bound by residues D229 and E230.

This sequence belongs to the anthranilate phosphoribosyltransferase family. In terms of assembly, homodimer. Requires Mg(2+) as cofactor.

It catalyses the reaction N-(5-phospho-beta-D-ribosyl)anthranilate + diphosphate = 5-phospho-alpha-D-ribose 1-diphosphate + anthranilate. It functions in the pathway amino-acid biosynthesis; L-tryptophan biosynthesis; L-tryptophan from chorismate: step 2/5. Catalyzes the transfer of the phosphoribosyl group of 5-phosphorylribose-1-pyrophosphate (PRPP) to anthranilate to yield N-(5'-phosphoribosyl)-anthranilate (PRA). The chain is Anthranilate phosphoribosyltransferase from Burkholderia multivorans (strain ATCC 17616 / 249).